A 242-amino-acid polypeptide reads, in one-letter code: Host range factor p28 (242 aa).

In terms of domain architecture, KilA-N spans 21-131 (YIDEPNDIRL…QSILRGLVNW (111 aa)). The segment at 173 to 226 (CGICYEVVYSKRLENDRYFGLLDSCNHIFCITCINIWHRTRRETGALDNCPICR) adopts an RING-type zinc-finger fold.

Belongs to the orthopoxvirus OPG021 family.

The protein localises to the host cytoplasm. It carries out the reaction S-ubiquitinyl-[E2 ubiquitin-conjugating enzyme]-L-cysteine + [acceptor protein]-L-lysine = [E2 ubiquitin-conjugating enzyme]-L-cysteine + N(6)-ubiquitinyl-[acceptor protein]-L-lysine.. Its function is as follows. RING-finger E3 ubiquitin ligase which catalyzes the formation of both 'Lys-48'- and 'Lys-63'-linked polyubiquitin chains. Plays an important role in virulence by acting as an anti-apoptotic factor. This is Host range factor p28 (OPG021) from Cynomys gunnisoni (Gunnison's prairie dog).